The following is a 599-amino-acid chain: Peptidyl-Asp metalloendopeptidase (599 aa).

Positions 1-20 are cleaved as a signal peptide; the sequence is MKKSLLCSTLALAVASAAQA. His164 serves as a coordination point for Zn(2+). Glu165 is an active-site residue. Positions 168 and 174 each coordinate Zn(2+). The disordered stretch occupies residues 265–285; it reads PTKVPGTVNPGSGGDTPTPPD. Residues 458-583 enclose the CBM-cenC domain; sequence YDFESGIGGW…KRAELMILSG (126 aa).

This sequence belongs to the peptidase M72 family. As to quaternary structure, interacts with BamI, the product of its coregulated adjacent gene, which inhibits its protease activity. Requires Zn(2+) as cofactor. Post-translationally, made as a membrane-associated pre-pro-protein, which is exported to the periplasm with removal of the signal peptide, leading to a protein with a molecular mass of 65 kDa, that likely contains the metzincin domain plus tandem carbohydrate-binding domains. Undergoes processing during export to the extracellular milieu, probably by autocatalysis, yielding a (mature length) 25 kDa protein that most likely corresponds to the metzincin domain only.

The protein resides in the secreted. The catalysed reaction is Cleavage of Xaa-|-Asp, Xaa-|-Glu and Xaa-|-cysteic acid bonds.. With respect to regulation, is inhibited by BamI, the product of its coregulated adjacent gene. Metalloprotease with endopeptidase activity. Specifically cleaves on the N-terminal side of aspartyl, glutamyl and cysteic acid residues. Mep72 appears to be a secreted biofilm-specific regulator that affects the processing of a very specific subset of virulence factors exported by the type III secretion machinery as well as flagellar proteins. Binds directly to ExoS and PcrV and affects the processing of these proteins in the biofilm secretome, but contrary to expectation, Mep72 seems to protect these targets against proteolytic processing/degradation. This is Peptidyl-Asp metalloendopeptidase from Pseudomonas aeruginosa (strain ATCC 15692 / DSM 22644 / CIP 104116 / JCM 14847 / LMG 12228 / 1C / PRS 101 / PAO1).